The sequence spans 637 residues: Threonine--tRNA ligase (637 aa).

The TGS domain occupies 1-61; sequence MLNITLPDCS…VEDSAVQIIT (61 aa). Residues 242–533 are catalytic; it reads DHRKLGKQLD…LIENHAGSFP (292 aa). Zn(2+) contacts are provided by C333, H384, and H510.

This sequence belongs to the class-II aminoacyl-tRNA synthetase family. As to quaternary structure, homodimer. The cofactor is Zn(2+).

The protein localises to the cytoplasm. The catalysed reaction is tRNA(Thr) + L-threonine + ATP = L-threonyl-tRNA(Thr) + AMP + diphosphate + H(+). Functionally, catalyzes the attachment of threonine to tRNA(Thr) in a two-step reaction: L-threonine is first activated by ATP to form Thr-AMP and then transferred to the acceptor end of tRNA(Thr). Also edits incorrectly charged L-seryl-tRNA(Thr). This is Threonine--tRNA ligase from Neisseria gonorrhoeae (strain ATCC 700825 / FA 1090).